The following is a 519-amino-acid chain: Lysine histidine transporter-like 8 (519 aa).

Residues 1 to 44 (MDERPETELISIPATPRVSTPEILTPSGQRSPRPATKPSSATWT) are disordered. Residues 1–114 (MDERPETELI…NLNAGVGFQA (114 aa)) are Cytoplasmic-facing. 2 helical membrane passes run 115–135 (LVLP…SLTI) and 136–156 (AYCW…AVPG). Topologically, residues 157 to 176 (KRYNRYVELAQAAFGERLGV) are cytoplasmic. A helical transmembrane segment spans residues 177 to 197 (WLALFPTVYLSAGTATALILI). Over 198–217 (GGETMKLFFQIVCGPLCTSN) the chain is Extracellular. A helical membrane pass occupies residues 218-238 (PLTTVEWYLVFTSLCIVLSQL). The Cytoplasmic portion of the chain corresponds to 239 to 243 (PNLNS). A helical membrane pass occupies residues 244–264 (IAGLSLIGAVTAITYSTMVWV). The Extracellular segment spans residues 265-282 (LSVSQPRPATISYEPLSM). The chain crosses the membrane as a helical span at residues 283-303 (PSTSGSLFAVLNALGIIAFAF). At 304–333 (RGHNLVLEIQSTMPSTFKHPAHVPMWRGAK) the chain is on the cytoplasmic side. Residues 334 to 354 (ISYFLIALCIFPISIGGFWAY) form a helical membrane-spanning segment. Residues 355 to 377 (GNLMPSGGMLAALYAFHIHDIPR) lie on the Extracellular side of the membrane. The helical transmembrane segment at 378-398 (GLLATAFLLVVFSCLSSFQIY) threads the bilayer. Residues 399–427 (SMPAFDSFEAGYTSRTNKPCSIWVRSGFR) lie on the Cytoplasmic side of the membrane. Residues 428–448 (VFFGFVSFFIGVALPFLSSLA) traverse the membrane as a helical segment. A topological domain (extracellular) is located at residue glycine 449. Residues 450-470 (LLGGLTLPVTFAYPCFMWVLI) traverse the membrane as a helical segment. The Cytoplasmic segment spans residues 471–485 (KKPAKYSFNWYFHWG). The helical transmembrane segment at 486-506 (LGWLGVAFSLAFSIGGIWSMV) threads the bilayer. Residues 507-519 (TNGLKLKFFKPPN) are Extracellular-facing.

This sequence belongs to the amino acid/polyamine transporter 2 family. Amino acid/auxin permease (AAAP) (TC 2.A.18.2) subfamily.

The protein resides in the cell membrane. Its function is as follows. Amino acid transporter. This is Lysine histidine transporter-like 8 (AATL1) from Arabidopsis thaliana (Mouse-ear cress).